An 83-amino-acid chain; its full sequence is Exodeoxyribonuclease 7 small subunit (83 aa).

It belongs to the XseB family. Heterooligomer composed of large and small subunits.

The protein localises to the cytoplasm. The catalysed reaction is Exonucleolytic cleavage in either 5'- to 3'- or 3'- to 5'-direction to yield nucleoside 5'-phosphates.. In terms of biological role, bidirectionally degrades single-stranded DNA into large acid-insoluble oligonucleotides, which are then degraded further into small acid-soluble oligonucleotides. This Bradyrhizobium diazoefficiens (strain JCM 10833 / BCRC 13528 / IAM 13628 / NBRC 14792 / USDA 110) protein is Exodeoxyribonuclease 7 small subunit.